Reading from the N-terminus, the 831-residue chain is Intraflagellar transport protein 88 (831 aa).

TPR repeat units follow at residues 68 to 101, 120 to 153, 156 to 189, 248 to 281, 492 to 525, 526 to 559, 560 to 593, 595 to 627, 632 to 665, 666 to 699, and 700 to 733; these read IFKL…EQKV, TCIW…AEGA, AQIR…ASPS, FDPL…SILI, RGVH…DPYD, SFAH…NMES, VQAT…LPSY, DAIY…FSAV, PSIY…VPFS, LAVI…DTTT, and PKWS…FPTN. The tract at residues 785 to 816 is disordered; the sequence is RRNSVAAVGPGSRAGQDRFEASNNRVSSNTGD. A compositionally biased stretch (polar residues) spans 805 to 815; it reads ASNNRVSSNTG.

It is found in the cell projection. The protein resides in the cilium. It localises to the flagellum. The protein localises to the cytoplasm. Its subcellular location is the cytoskeleton. It is found in the flagellum axoneme. The protein resides in the flagellum basal body. In terms of biological role, component of the intraflagellar transport complex B (IFT-B) involved in flagellar assembly. The sequence is that of Intraflagellar transport protein 88 from Giardia intestinalis (strain ATCC 50803 / WB clone C6) (Giardia lamblia).